The sequence spans 928 residues: MFTSQRQLRQNGSPMSSSRSSQHSSGTASPISDSPASNRSYGRDLRGLMGIDIPANEPAFNRANSSDTIYFRPKKIYKMEHEHPSRSTLVQLQTRSQPDDVASSQVNPEGGTDDLELGDPCGNQSLYTIGAEYVPDLDFTKLVNEWQKSTEDLYEFRSSATPQVQIKDSGKGNYELWSSPDAILTQNKLRRDSFSQENSDSLSPEDSILSRNLHSKVKPIPLPRNSQQIFTPLSNLEAERRSSYTTSSNNNSITQNNKFSFAKLKYSLPTQSSAVPASFDSNASSLNFLPTTTLSTLSELQISPNDMMDLIQKLPRNFLNLPYTQRKKVIIEHAPSHDYKAMMSLVKKFMLTSSRSNFSLAGFANNASVSQATANDDNINSRNTPNNSNDTYVNTRPLQRSRHGSIASQFLSSFSPSMTSIAKMNSNPLSGSAGGSARPDDKGMEILGHRLGKIIGFGAWGIIRECFDIETGVGRVIKIVKFKGHQNIKKHVLREVAIWRTLKHNRILPLLDWKLDDNYAMYCLTERINDGTLYDLVISWDEFKRSKIPFAERCRLTIFLSLQLLSALKYMHSKTIVHGDIKLENCLLQKEGKKSDWKVFLCDFGMSCHFDEKHVYRNDTFDENLSSGNSHRKRKSIEQTNLIKYPTTNFLPDDRTNDFDASENLKYQFENRKHQPFTPKGMVSSSSHSLKHLNQPSSSSSSNLFHKPASQPQPQHRSPFHGRHKTTDFSNLEPEPSKYIGSLPYASPELLRYSDARRSKSVEMHIYDSPDSSQSEISAASSSSSNLSSLSSSTKASAVTNSGVTTSSPSGSSTDFPCIVSPLGPASDIWALGVMLYTMLVGKLPFNHEFEPRLRSLIKVGEFDRFSLAQVCKFDRKKNEGTIGQGLYDTVIGCLTIDLDKRWKLKRIEEVLQNEMNLSEAIHDNNGS.

The span at 1–12 (MFTSQRQLRQNG) shows a compositional bias: polar residues. Disordered stretches follow at residues 1-43 (MFTS…SYGR) and 81-118 (HEHP…LELG). Residues 13–29 (SPMSSSRSSQHSSGTAS) are compositionally biased toward low complexity. Polar residues-rich tracts occupy residues 30–40 (PISDSPASNRS) and 86–107 (RSTL…SQVN). S178 and S179 each carry phosphoserine. Residues 374-394 (ANDDNINSRNTPNNSNDTYVN) are disordered. A compositionally biased stretch (low complexity) spans 375-391 (NDDNINSRNTPNNSNDT). S405 and S426 each carry phosphoserine. The Protein kinase domain maps to 449–912 (HRLGKIIGFG…WKLKRIEEVL (464 aa)). Residues 455 to 463 (IGFGAWGII) and K478 contribute to the ATP site. Residue D580 is the Proton acceptor of the active site. Disordered stretches follow at residues 670-741 (ENRK…KYIG) and 767-813 (YDSP…SGSS). The segment covering 683–696 (VSSSSHSLKHLNQP) has biased composition (polar residues). At S737 the chain carries Phosphoserine. Phosphotyrosine is present on Y739. The span at 769-813 (SPDSSQSEISAASSSSSNLSSLSSSTKASAVTNSGVTTSSPSGSS) shows a compositional bias: low complexity.

Belongs to the protein kinase superfamily. Ser/Thr protein kinase family. As to quaternary structure, interacts with URE2 and GDH2. Also interacts with the TORC1 kinase complex.

The protein localises to the cytoplasm. The catalysed reaction is L-seryl-[protein] + ATP = O-phospho-L-seryl-[protein] + ADP + H(+). The enzyme catalyses L-threonyl-[protein] + ATP = O-phospho-L-threonyl-[protein] + ADP + H(+). In terms of biological role, serine/threonine-protein kinase involved in the phosphorylation of the NAD(+)-dependent glutamate dehydrogenase GDH2. When overexpressed, confers hypersensitivity to rapamycin and induces rapid nuclear accumulation of GLN3 to activate the transcription of nitrogen-regulated genes. The protein is Nitrogen network kinase 1 (NNK1) of Saccharomyces cerevisiae (strain ATCC 204508 / S288c) (Baker's yeast).